A 558-amino-acid polypeptide reads, in one-letter code: Formate--tetrahydrofolate ligase (558 aa).

67-74 (TPAGEGKT) lines the ATP pocket.

This sequence belongs to the formate--tetrahydrofolate ligase family.

The enzyme catalyses (6S)-5,6,7,8-tetrahydrofolate + formate + ATP = (6R)-10-formyltetrahydrofolate + ADP + phosphate. The protein operates within one-carbon metabolism; tetrahydrofolate interconversion. This Ruegeria pomeroyi (strain ATCC 700808 / DSM 15171 / DSS-3) (Silicibacter pomeroyi) protein is Formate--tetrahydrofolate ligase.